Reading from the N-terminus, the 126-residue chain is Profilin (126 aa).

This sequence belongs to the profilin family. As to quaternary structure, occurs in many kinds of cells as a complex with monomeric actin in a 1:1 ratio.

The protein localises to the cytoplasm. The protein resides in the cytoskeleton. Binds to actin and affects the structure of the cytoskeleton. At high concentrations, profilin prevents the polymerization of actin, whereas it enhances it at low concentrations. By binding to PIP2, it inhibits the formation of IP3 and DG. This chain is Profilin, found in Branchiostoma belcheri (Amphioxus).